The primary structure comprises 412 residues: Multifunctional CCA protein (412 aa).

ATP-binding residues include G8 and R11. Positions 8 and 11 each coordinate CTP. Mg(2+)-binding residues include D21 and D23. Residues R91, R137, and R140 each contribute to the ATP site. Residues R91, R137, and R140 each coordinate CTP. Residues 226 to 327 (TGIHTMMVID…VTLFEKTDAL (102 aa)) form the HD domain.

Belongs to the tRNA nucleotidyltransferase/poly(A) polymerase family. Bacterial CCA-adding enzyme type 1 subfamily. As to quaternary structure, monomer. Can also form homodimers and oligomers. Mg(2+) serves as cofactor. Ni(2+) is required as a cofactor.

The catalysed reaction is a tRNA precursor + 2 CTP + ATP = a tRNA with a 3' CCA end + 3 diphosphate. It catalyses the reaction a tRNA with a 3' CCA end + 2 CTP + ATP = a tRNA with a 3' CCACCA end + 3 diphosphate. Its function is as follows. Catalyzes the addition and repair of the essential 3'-terminal CCA sequence in tRNAs without using a nucleic acid template. Adds these three nucleotides in the order of C, C, and A to the tRNA nucleotide-73, using CTP and ATP as substrates and producing inorganic pyrophosphate. tRNA 3'-terminal CCA addition is required both for tRNA processing and repair. Also involved in tRNA surveillance by mediating tandem CCA addition to generate a CCACCA at the 3' terminus of unstable tRNAs. While stable tRNAs receive only 3'-terminal CCA, unstable tRNAs are marked with CCACCA and rapidly degraded. In Dechloromonas aromatica (strain RCB), this protein is Multifunctional CCA protein.